Consider the following 378-residue polypeptide: uncharacterized protein (378 aa).

10 helical membrane passes run 7–29, 33–55, 68–85, 90–108, 115–137, 152–174, 204–225, 245–267, 280–302, and 347–366; these read VTPF…RLSQ, LFFV…YQII, VSYL…EFYT, SGSL…HLLL, PLTV…FLYL, LTVG…MLIM, NYKL…FLYL, IFLF…ASHA, LILY…PRIV, and FSPL…ALFL.

It localises to the cell membrane. This is an uncharacterized protein from Aquifex aeolicus (strain VF5).